The sequence spans 227 residues: Lipoprotein-releasing system ATP-binding protein LolD (227 aa).

The ABC transporter domain occupies 6–227 (LEMRGITKSY…RLDAGQLSDV (222 aa)). ATP is bound at residue 43-50 (APSGAGKS).

This sequence belongs to the ABC transporter superfamily. Lipoprotein translocase (TC 3.A.1.125) family. The complex is composed of two ATP-binding proteins (LolD) and two transmembrane proteins (LolC and LolE).

It localises to the cell inner membrane. Functionally, part of the ABC transporter complex LolCDE involved in the translocation of mature outer membrane-directed lipoproteins, from the inner membrane to the periplasmic chaperone, LolA. Responsible for the formation of the LolA-lipoprotein complex in an ATP-dependent manner. This chain is Lipoprotein-releasing system ATP-binding protein LolD, found in Roseobacter denitrificans (strain ATCC 33942 / OCh 114) (Erythrobacter sp. (strain OCh 114)).